Consider the following 234-residue polypeptide: 1-(5-phosphoribosyl)-5-[(5-phosphoribosylamino)methylideneamino] imidazole-4-carboxamide isomerase (234 aa).

The active-site Proton acceptor is the Asp9. The Proton donor role is filled by Asp131.

It belongs to the HisA/HisF family.

Its subcellular location is the cytoplasm. The catalysed reaction is 1-(5-phospho-beta-D-ribosyl)-5-[(5-phospho-beta-D-ribosylamino)methylideneamino]imidazole-4-carboxamide = 5-[(5-phospho-1-deoxy-D-ribulos-1-ylimino)methylamino]-1-(5-phospho-beta-D-ribosyl)imidazole-4-carboxamide. Its pathway is amino-acid biosynthesis; L-histidine biosynthesis; L-histidine from 5-phospho-alpha-D-ribose 1-diphosphate: step 4/9. This chain is 1-(5-phosphoribosyl)-5-[(5-phosphoribosylamino)methylideneamino] imidazole-4-carboxamide isomerase, found in Staphylococcus aureus (strain MRSA252).